Reading from the N-terminus, the 256-residue chain is Imidazole glycerol phosphate synthase subunit HisF (256 aa).

Active-site residues include D11 and D130.

The protein belongs to the HisA/HisF family. Heterodimer of HisH and HisF.

Its subcellular location is the cytoplasm. It catalyses the reaction 5-[(5-phospho-1-deoxy-D-ribulos-1-ylimino)methylamino]-1-(5-phospho-beta-D-ribosyl)imidazole-4-carboxamide + L-glutamine = D-erythro-1-(imidazol-4-yl)glycerol 3-phosphate + 5-amino-1-(5-phospho-beta-D-ribosyl)imidazole-4-carboxamide + L-glutamate + H(+). It participates in amino-acid biosynthesis; L-histidine biosynthesis; L-histidine from 5-phospho-alpha-D-ribose 1-diphosphate: step 5/9. In terms of biological role, IGPS catalyzes the conversion of PRFAR and glutamine to IGP, AICAR and glutamate. The HisF subunit catalyzes the cyclization activity that produces IGP and AICAR from PRFAR using the ammonia provided by the HisH subunit. This Prochlorococcus marinus (strain AS9601) protein is Imidazole glycerol phosphate synthase subunit HisF.